Consider the following 681-residue polypeptide: DNA-directed RNA polymerase subunit beta' (681 aa).

Zn(2+) contacts are provided by cysteine 69, cysteine 71, cysteine 87, and cysteine 90. Mg(2+)-binding residues include aspartate 489, aspartate 491, and aspartate 493.

The protein belongs to the RNA polymerase beta' chain family. RpoC1 subfamily. In plastids the minimal PEP RNA polymerase catalytic core is composed of four subunits: alpha, beta, beta', and beta''. When a (nuclear-encoded) sigma factor is associated with the core the holoenzyme is formed, which can initiate transcription. Requires Mg(2+) as cofactor. The cofactor is Zn(2+).

The protein resides in the plastid. It is found in the chloroplast. It carries out the reaction RNA(n) + a ribonucleoside 5'-triphosphate = RNA(n+1) + diphosphate. DNA-dependent RNA polymerase catalyzes the transcription of DNA into RNA using the four ribonucleoside triphosphates as substrates. The polypeptide is DNA-directed RNA polymerase subunit beta' (Cycas taitungensis (Prince sago)).